A 589-amino-acid chain; its full sequence is Cyclohexane-1,2-dione hydrolase (589 aa).

Residue glutamate 52 participates in thiamine diphosphate binding. Residues 400-480 (NHTLPMFGGA…VITMVFTNES (81 aa)) form a thiamine pyrophosphate binding region. Mg(2+) contacts are provided by aspartate 451 and asparagine 478.

This sequence belongs to the TPP enzyme family. As to quaternary structure, homodimer. It depends on Mg(2+) as a cofactor. Requires thiamine diphosphate as cofactor. The cofactor is FAD.

It carries out the reaction cyclohexan-1,2-dione + H2O = 6-oxohexanoate + H(+). In terms of biological role, catalyzes the ring-opening cleavage of the alicyclic alcohol cyclohexane-1,2-dione. The sequence is that of Cyclohexane-1,2-dione hydrolase from Azoarcus sp.